Consider the following 229-residue polypeptide: Ribonuclease 3 (229 aa).

The RNase III domain occupies leucine 5–glycine 127. Glutamate 40 contacts Mg(2+). The active site involves aspartate 44. Residues aspartate 113 and glutamate 116 each coordinate Mg(2+). Residue glutamate 116 is part of the active site. Residues aspartate 154–valine 224 form the DRBM domain.

The protein belongs to the ribonuclease III family. Homodimer. Requires Mg(2+) as cofactor.

The protein localises to the cytoplasm. The enzyme catalyses Endonucleolytic cleavage to 5'-phosphomonoester.. Its function is as follows. Digests double-stranded RNA. Involved in the processing of primary rRNA transcript to yield the immediate precursors to the large and small rRNAs (23S and 16S). Processes some mRNAs, and tRNAs when they are encoded in the rRNA operon. Processes pre-crRNA and tracrRNA of type II CRISPR loci if present in the organism. The chain is Ribonuclease 3 from Pseudomonas fluorescens (strain ATCC BAA-477 / NRRL B-23932 / Pf-5).